The following is a 273-amino-acid chain: Dermonecrotic toxin SdSicTox-betaIF1 (273 aa).

The active site involves histidine 5. 2 residues coordinate Mg(2+): glutamate 25 and aspartate 27. Catalysis depends on histidine 41, which acts as the Nucleophile. 2 disulfides stabilise this stretch: cysteine 45–cysteine 51 and cysteine 47–cysteine 189.

The protein belongs to the arthropod phospholipase D family. Class II subfamily. Requires Mg(2+) as cofactor. As to expression, expressed by the venom gland.

The protein localises to the secreted. The enzyme catalyses an N-(acyl)-sphingosylphosphocholine = an N-(acyl)-sphingosyl-1,3-cyclic phosphate + choline. The catalysed reaction is an N-(acyl)-sphingosylphosphoethanolamine = an N-(acyl)-sphingosyl-1,3-cyclic phosphate + ethanolamine. It carries out the reaction a 1-acyl-sn-glycero-3-phosphocholine = a 1-acyl-sn-glycero-2,3-cyclic phosphate + choline. It catalyses the reaction a 1-acyl-sn-glycero-3-phosphoethanolamine = a 1-acyl-sn-glycero-2,3-cyclic phosphate + ethanolamine. In terms of biological role, dermonecrotic toxins cleave the phosphodiester linkage between the phosphate and headgroup of certain phospholipids (sphingolipid and lysolipid substrates), forming an alcohol (often choline) and a cyclic phosphate. This toxin acts on sphingomyelin (SM). It may also act on ceramide phosphoethanolamine (CPE), lysophosphatidylcholine (LPC) and lysophosphatidylethanolamine (LPE), but not on lysophosphatidylserine (LPS), and lysophosphatidylglycerol (LPG). It acts by transphosphatidylation, releasing exclusively cyclic phosphate products as second products. Induces dermonecrosis, hemolysis, increased vascular permeability, edema, inflammatory response, and platelet aggregation. The protein is Dermonecrotic toxin SdSicTox-betaIF1 of Sicarius cf. damarensis (strain GJB-2008) (Six-eyed sand spider).